A 75-amino-acid chain; its full sequence is MAITSKYSNKQIEQMLTEMVDVLDKHRAPADLSLMLVGNIATNVLNQEVPAEQRQIIAEKFAQALLSSLDKPKTH.

It belongs to the UPF0352 family.

The chain is UPF0352 protein VF_1649 from Aliivibrio fischeri (strain ATCC 700601 / ES114) (Vibrio fischeri).